Here is a 123-residue protein sequence, read N- to C-terminus: Prismalin-14 (123 aa).

Positions 1–16 (MRSLLVLLALAACASA) are cleaved as a signal peptide.

In terms of tissue distribution, prismatic layer of shell (at protein level). Expressed primarily in the mantle with highest level in the mantle edge and lower level in the mantle pallium.

It is found in the secreted. Functionally, may be involved in calcification of the prismatic layer of the shell. The sequence is that of Prismalin-14 from Margaritifera margaritifera (Freshwater pearl mussel).